A 230-amino-acid polypeptide reads, in one-letter code: Cutinase (230 aa).

The signal sequence occupies residues 1–16 (MKFFALTTFLAATASA). Cys47 and Cys125 form a disulfide bridge. Catalysis depends on Ser136, which acts as the Nucleophile. Cys187 and Cys194 are joined by a disulfide. Asp191 is a catalytic residue. His204 functions as the Proton donor/acceptor in the catalytic mechanism.

This sequence belongs to the cutinase family. The 2 disulfide bonds play a critical role in holding the catalytic residues in juxta-position; reduction of the disulfide bridges results in the complete inactivation of the enzyme.

The protein localises to the secreted. It catalyses the reaction cutin + H2O = cutin monomers.. Functionally, catalyzes the hydrolysis of complex carboxylic polyesters found in the cell wall of plants. Degrades cutin, a macromolecule that forms the structure of the plant cuticle. Allows pathogenic fungi to penetrate through the cuticular barrier into the host plant during the initial stage of fungal infection. In Fusarium solani subsp. cucurbitae (Neocosmosporum cucurbitae), this protein is Cutinase (CUTA).